The chain runs to 417 residues: Putative transporter AmpG 1 (417 aa).

The next 12 helical transmembrane spans lie at 7–27 (LCII…TGNT), 42–62 (IGIL…APIF), 78–98 (LSWI…FSFL), 104–124 (LLLF…QDTI), 143–163 (GIYI…AIYL), 171–191 (EIYK…IVGI), 225–245 (ALKP…LVLY), 273–293 (VGKF…GVIM), 301–321 (SIFL…FLEI), 328–348 (LLFI…TAYI), 366–386 (FLSS…GYMV), and 389–409 (FGWQ…LLIL).

The protein belongs to the major facilitator superfamily.

It is found in the cell inner membrane. This chain is Putative transporter AmpG 1 (ampG1), found in Rickettsia conorii (strain ATCC VR-613 / Malish 7).